Reading from the N-terminus, the 425-residue chain is 2-oxoglutarate and iron-dependent oxygenase JMJD4 (425 aa).

The 160-residue stretch at 141-300 (SRAFPEQDVY…IMWCFLQDEL (160 aa)) folds into the JmjC domain. Positions 188, 190, and 268 each coordinate Fe cation.

This sequence belongs to the JMJD6 family. The cofactor is Fe(2+).

Its subcellular location is the cytoplasm. It carries out the reaction L-lysyl-[protein] + 2-oxoglutarate + O2 = 4-hydroxy-L-lysyl-[protein] + succinate + CO2. Functionally, catalyzes the 2-oxoglutarate and iron-dependent C4-lysyl hydroxylation of ETF1 at 'Lys-63' thereby promoting the translational termination efficiency of ETF1. This Gallus gallus (Chicken) protein is 2-oxoglutarate and iron-dependent oxygenase JMJD4 (JMJD4).